The following is a 1395-amino-acid chain: DNA-directed RNA polymerase subunit beta' (1395 aa).

Zn(2+)-binding residues include C70, C72, C85, and C88. Residues D470, D472, and D474 each contribute to the Mg(2+) site. C815, C889, C896, and C899 together coordinate Zn(2+).

This sequence belongs to the RNA polymerase beta' chain family. In terms of assembly, the RNAP catalytic core consists of 2 alpha, 1 beta, 1 beta' and 1 omega subunit. When a sigma factor is associated with the core the holoenzyme is formed, which can initiate transcription. Requires Mg(2+) as cofactor. Zn(2+) is required as a cofactor.

The catalysed reaction is RNA(n) + a ribonucleoside 5'-triphosphate = RNA(n+1) + diphosphate. Functionally, DNA-dependent RNA polymerase catalyzes the transcription of DNA into RNA using the four ribonucleoside triphosphates as substrates. This is DNA-directed RNA polymerase subunit beta' from Anaeromyxobacter sp. (strain Fw109-5).